A 223-amino-acid polypeptide reads, in one-letter code: Oxaloacetate tautomerase FAHD1, mitochondrial (223 aa).

The transit peptide at 1-30 directs the protein to the mitochondrion; sequence MATSMIQRMFKQGTKIVCVGRNYAAHAKEL. The Mg(2+) site is built by Glu67, Glu69, and Asp98.

It belongs to the FAH family. The cofactor is Mg(2+). Mn(2+) is required as a cofactor.

The protein localises to the mitochondrion. The enzyme catalyses oxaloacetate = enol-oxaloacetate. In terms of biological role, tautomerase that converts enol-oxaloacetate, a strong inhibitor of succinate dehydrogenase, to the physiological keto form of oxaloacetate. The protein is Oxaloacetate tautomerase FAHD1, mitochondrial of Arabidopsis thaliana (Mouse-ear cress).